A 219-amino-acid polypeptide reads, in one-letter code: Vesicle-associated membrane protein 721 (219 aa).

Topologically, residues 1–196 are cytoplasmic; sequence MAQQSLIYSF…MWLQNMKIKL (196 aa). Residues 10-114 enclose the Longin domain; that stretch reads FVARGTVILV…SLNKEFGSKL (105 aa). The v-SNARE coiled-coil homology domain maps to 130–190; it reads KLAKVKAQVS…TQMRRKMWLQ (61 aa). Residues 197 to 217 traverse the membrane as a helical; Anchor for type IV membrane protein segment; it reads IVLAIIIALILIIVLSVCHGF. Topologically, residues 218–219 are vesicular; the sequence is KC.

It belongs to the synaptobrevin family. As to expression, expressed in flowers, leaves, stems and roots.

Its subcellular location is the cell membrane. The protein resides in the early endosome membrane. Functionally, involved in the targeting and/or fusion of transport vesicles to their target membrane. The chain is Vesicle-associated membrane protein 721 from Arabidopsis thaliana (Mouse-ear cress).